Consider the following 217-residue polypeptide: Pyridoxine/pyridoxamine 5'-phosphate oxidase (217 aa).

Substrate contacts are provided by residues 13–16 (RREY) and lysine 71. FMN-binding positions include 66 to 71 (RIVLLK), 81 to 82 (YT), arginine 87, lysine 88, and glutamine 110. Substrate-binding residues include tyrosine 128, arginine 132, and serine 136. FMN-binding positions include 145–146 (QS) and tryptophan 190. 196-198 (RLH) contributes to the substrate binding site. Arginine 200 serves as a coordination point for FMN.

This sequence belongs to the pyridoxamine 5'-phosphate oxidase family. As to quaternary structure, homodimer. It depends on FMN as a cofactor.

The enzyme catalyses pyridoxamine 5'-phosphate + O2 + H2O = pyridoxal 5'-phosphate + H2O2 + NH4(+). The catalysed reaction is pyridoxine 5'-phosphate + O2 = pyridoxal 5'-phosphate + H2O2. The protein operates within cofactor metabolism; pyridoxal 5'-phosphate salvage; pyridoxal 5'-phosphate from pyridoxamine 5'-phosphate: step 1/1. It participates in cofactor metabolism; pyridoxal 5'-phosphate salvage; pyridoxal 5'-phosphate from pyridoxine 5'-phosphate: step 1/1. Functionally, catalyzes the oxidation of either pyridoxine 5'-phosphate (PNP) or pyridoxamine 5'-phosphate (PMP) into pyridoxal 5'-phosphate (PLP). This is Pyridoxine/pyridoxamine 5'-phosphate oxidase from Serratia proteamaculans (strain 568).